The following is a 549-amino-acid chain: Vacuolar fusion protein MON1 homolog A (549 aa).

Disordered stretches follow at residues methionine 1–serine 90 and glutamate 109–glutamate 137. Residues glutamate 110–leucine 119 are compositionally biased toward basic and acidic residues.

Belongs to the MON1/SAND family.

Functionally, plays an important role in membrane trafficking through the secretory apparatus. Not involved in endocytic trafficking to lysosomes. The chain is Vacuolar fusion protein MON1 homolog A (MON1A) from Gallus gallus (Chicken).